The chain runs to 662 residues: PsbB mRNA maturation factor Mbb1, chloroplastic (662 aa).

A chloroplast-targeting transit peptide spans 1–50 (MSLVPFSQLWRGVRTRGPVEQASSSSSSSSSSRRTWYAPARSQTGVQVAA). Disordered stretches follow at residues 14-38 (RTRG…TWYA) and 75-101 (IIAD…RDEA). The span at 23-32 (SSSSSSSSSS) shows a compositional bias: low complexity. The span at 88-101 (EGERGDATGSRDEA) shows a compositional bias: basic and acidic residues. TPR repeat units follow at residues 126–160 (SRIR…DPAD), 161–194 (PRAY…TGNV), 196–229 (PYIW…DGTH), 231–263 (CAWH…CRRK), 269–302 (AYLY…AEGA), 305–338 (VALW…NPRS), 339–372 (RYVH…NPTD), 373–406 (PALY…DPSD), 408–440 (YMWQ…DPRS), and 444–477 (VYVF…DPKS). Disordered stretches follow at residues 540 to 563 (SDGN…EAAA) and 598 to 662 (LPDF…RSMG).

In terms of assembly, part of a 300 kDa complex that associates with RNA.

Its subcellular location is the plastid. The protein resides in the chloroplast stroma. Functionally, involved, directly or indirectly, in the processing of the chloroplast encoded psbB mRNA to its mature form, acting via the 5'-UTR of the psbB mRNA. This chain is PsbB mRNA maturation factor Mbb1, chloroplastic (MBB1), found in Chlamydomonas reinhardtii (Chlamydomonas smithii).